The following is a 226-amino-acid chain: Ribose-5-phosphate isomerase A (226 aa).

Residues 28–31 (TGST), 84–87 (DGAD), and 97–100 (KGLG) contribute to the substrate site. E106 (proton acceptor) is an active-site residue. K124 contacts substrate.

Belongs to the ribose 5-phosphate isomerase family. As to quaternary structure, homodimer.

The catalysed reaction is aldehydo-D-ribose 5-phosphate = D-ribulose 5-phosphate. The protein operates within carbohydrate degradation; pentose phosphate pathway; D-ribose 5-phosphate from D-ribulose 5-phosphate (non-oxidative stage): step 1/1. Functionally, catalyzes the reversible conversion of ribose-5-phosphate to ribulose 5-phosphate. The protein is Ribose-5-phosphate isomerase A of Deinococcus radiodurans (strain ATCC 13939 / DSM 20539 / JCM 16871 / CCUG 27074 / LMG 4051 / NBRC 15346 / NCIMB 9279 / VKM B-1422 / R1).